We begin with the raw amino-acid sequence, 464 residues long: Protein ABHD18 (464 aa).

Positions 1–24 are cleaved as a signal peptide; the sequence is MGVSKLDILYRRLLLTKLFIRGWG. The N-linked (GlcNAc...) asparagine glycan is linked to Asn-341.

Belongs to the AB hydrolase superfamily.

Its subcellular location is the secreted. The polypeptide is Protein ABHD18 (Rattus norvegicus (Rat)).